The sequence spans 506 residues: SPbeta prophage-derived uncharacterized protein YonE (506 aa).

The interval 473–506 (YTFTGNEVGRPNEGNKNNDNTVKSATSNGNDNPI) is disordered. Residues 486 to 506 (GNKNNDNTVKSATSNGNDNPI) show a composition bias toward polar residues.

The sequence is that of SPbeta prophage-derived uncharacterized protein YonE (yonE) from Bacillus subtilis (strain 168).